We begin with the raw amino-acid sequence, 629 residues long: 1-deoxy-D-xylulose-5-phosphate synthase (629 aa).

Thiamine diphosphate is bound by residues His78 and 119–121; that span reads AHS. Residue Asp150 participates in Mg(2+) binding. Thiamine diphosphate-binding positions include 151–152, Asn179, Tyr286, and Glu368; that span reads GA. Asn179 serves as a coordination point for Mg(2+).

This sequence belongs to the transketolase family. DXPS subfamily. As to quaternary structure, homodimer. The cofactor is Mg(2+). Thiamine diphosphate is required as a cofactor.

The catalysed reaction is D-glyceraldehyde 3-phosphate + pyruvate + H(+) = 1-deoxy-D-xylulose 5-phosphate + CO2. Its pathway is metabolic intermediate biosynthesis; 1-deoxy-D-xylulose 5-phosphate biosynthesis; 1-deoxy-D-xylulose 5-phosphate from D-glyceraldehyde 3-phosphate and pyruvate: step 1/1. In terms of biological role, catalyzes the acyloin condensation reaction between C atoms 2 and 3 of pyruvate and glyceraldehyde 3-phosphate to yield 1-deoxy-D-xylulose-5-phosphate (DXP). This Acidovorax ebreus (strain TPSY) (Diaphorobacter sp. (strain TPSY)) protein is 1-deoxy-D-xylulose-5-phosphate synthase.